The sequence spans 215 residues: Protein-L-isoaspartate O-methyltransferase (215 aa).

Ser-62 is a catalytic residue.

The protein belongs to the methyltransferase superfamily. L-isoaspartyl/D-aspartyl protein methyltransferase family.

It localises to the cytoplasm. It catalyses the reaction [protein]-L-isoaspartate + S-adenosyl-L-methionine = [protein]-L-isoaspartate alpha-methyl ester + S-adenosyl-L-homocysteine. Its function is as follows. Catalyzes the methyl esterification of L-isoaspartyl residues in peptides and proteins that result from spontaneous decomposition of normal L-aspartyl and L-asparaginyl residues. It plays a role in the repair and/or degradation of damaged proteins. This chain is Protein-L-isoaspartate O-methyltransferase, found in Ruegeria pomeroyi (strain ATCC 700808 / DSM 15171 / DSS-3) (Silicibacter pomeroyi).